A 117-amino-acid polypeptide reads, in one-letter code: uncharacterized protein (117 aa).

Over residues 1-19 (MTSNPSSSADQPLSGTTVP) the composition is skewed to polar residues. Residues 1–28 (MTSNPSSSADQPLSGTTVPGSVPGKAPE) form a disordered region. The next 2 membrane-spanning stretches (helical) occupy residues 38–58 (AAVW…LIFI) and 76–96 (LPLG…TVFA).

The protein resides in the cell membrane. This is an uncharacterized protein from Mycobacterium tuberculosis (strain ATCC 25618 / H37Rv).